A 300-amino-acid polypeptide reads, in one-letter code: Sulfate adenylyltransferase subunit 2 (300 aa).

The disordered stretch occupies residues 281–300; the sequence is RAIDRDEAGSMEKKKREGYF.

This sequence belongs to the PAPS reductase family. CysD subfamily. As to quaternary structure, heterodimer composed of CysD, the smaller subunit, and CysN.

The enzyme catalyses sulfate + ATP + H(+) = adenosine 5'-phosphosulfate + diphosphate. Its pathway is sulfur metabolism; hydrogen sulfide biosynthesis; sulfite from sulfate: step 1/3. With CysN forms the ATP sulfurylase (ATPS) that catalyzes the adenylation of sulfate producing adenosine 5'-phosphosulfate (APS) and diphosphate, the first enzymatic step in sulfur assimilation pathway. APS synthesis involves the formation of a high-energy phosphoric-sulfuric acid anhydride bond driven by GTP hydrolysis by CysN coupled to ATP hydrolysis by CysD. This Brucella melitensis biotype 2 (strain ATCC 23457) protein is Sulfate adenylyltransferase subunit 2.